We begin with the raw amino-acid sequence, 246 residues long: tRNA pseudouridine synthase A (246 aa).

The Nucleophile role is filled by Asp54. Tyr112 is a substrate binding site.

This sequence belongs to the tRNA pseudouridine synthase TruA family. As to quaternary structure, homodimer.

The enzyme catalyses uridine(38/39/40) in tRNA = pseudouridine(38/39/40) in tRNA. Functionally, formation of pseudouridine at positions 38, 39 and 40 in the anticodon stem and loop of transfer RNAs. The chain is tRNA pseudouridine synthase A from Moorella thermoacetica (strain ATCC 39073 / JCM 9320).